Reading from the N-terminus, the 274-residue chain is Penicillin-insensitive murein endopeptidase (274 aa).

A signal peptide spans 1–19 (MKKTAIALLAWFVSSASLA). 3 disulfide bridges follow: cysteine 44–cysteine 265, cysteine 187–cysteine 235, and cysteine 216–cysteine 223. Residues histidine 110, histidine 113, aspartate 120, aspartate 147, histidine 150, and histidine 211 each contribute to the Zn(2+) site. Residues 225–274 (DQPLPPPGDGCGAELQSWFEPPKPGTTKPEKKTPPPLPPSCQALLDEHVL) are disordered.

This sequence belongs to the peptidase M74 family. In terms of assembly, dimer. Requires Zn(2+) as cofactor.

It localises to the periplasm. In terms of biological role, murein endopeptidase that cleaves the D-alanyl-meso-2,6-diamino-pimelyl amide bond that connects peptidoglycan strands. Likely plays a role in the removal of murein from the sacculus. In Salmonella heidelberg (strain SL476), this protein is Penicillin-insensitive murein endopeptidase.